Reading from the N-terminus, the 227-residue chain is Cytochrome c oxidase subunit 2 (227 aa).

The Mitochondrial intermembrane portion of the chain corresponds to 1-14 (MAHPVQLGLQDATS). A helical membrane pass occupies residues 15–45 (PVMEELITFHDYALMTISLISFLVLYALFST). Residues 46-59 (LTTKLTNTNITDAQ) are Mitochondrial matrix-facing. Residues 60–87 (EMETTWTILPAVILILIALPSLRILYLT) form a helical membrane-spanning segment. Topologically, residues 88–227 (DEINNPSFTI…IFEMGPVFTL (140 aa)) are mitochondrial intermembrane. The Cu cation site is built by His-161, Cys-196, Glu-198, Cys-200, His-204, and Met-207. Glu-198 lines the Mg(2+) pocket.

Belongs to the cytochrome c oxidase subunit 2 family. As to quaternary structure, component of the cytochrome c oxidase (complex IV, CIV), a multisubunit enzyme composed of 14 subunits. The complex is composed of a catalytic core of 3 subunits MT-CO1, MT-CO2 and MT-CO3, encoded in the mitochondrial DNA, and 11 supernumerary subunits COX4I, COX5A, COX5B, COX6A, COX6B, COX6C, COX7A, COX7B, COX7C, COX8 and NDUFA4, which are encoded in the nuclear genome. The complex exists as a monomer or a dimer and forms supercomplexes (SCs) in the inner mitochondrial membrane with NADH-ubiquinone oxidoreductase (complex I, CI) and ubiquinol-cytochrome c oxidoreductase (cytochrome b-c1 complex, complex III, CIII), resulting in different assemblies (supercomplex SCI(1)III(2)IV(1) and megacomplex MCI(2)III(2)IV(2)). Found in a complex with TMEM177, COA6, COX18, COX20, SCO1 and SCO2. Interacts with TMEM177 in a COX20-dependent manner. Interacts with COX20. Interacts with COX16. Cu cation serves as cofactor.

It localises to the mitochondrion inner membrane. It carries out the reaction 4 Fe(II)-[cytochrome c] + O2 + 8 H(+)(in) = 4 Fe(III)-[cytochrome c] + 2 H2O + 4 H(+)(out). Its function is as follows. Component of the cytochrome c oxidase, the last enzyme in the mitochondrial electron transport chain which drives oxidative phosphorylation. The respiratory chain contains 3 multisubunit complexes succinate dehydrogenase (complex II, CII), ubiquinol-cytochrome c oxidoreductase (cytochrome b-c1 complex, complex III, CIII) and cytochrome c oxidase (complex IV, CIV), that cooperate to transfer electrons derived from NADH and succinate to molecular oxygen, creating an electrochemical gradient over the inner membrane that drives transmembrane transport and the ATP synthase. Cytochrome c oxidase is the component of the respiratory chain that catalyzes the reduction of oxygen to water. Electrons originating from reduced cytochrome c in the intermembrane space (IMS) are transferred via the dinuclear copper A center (CU(A)) of subunit 2 and heme A of subunit 1 to the active site in subunit 1, a binuclear center (BNC) formed by heme A3 and copper B (CU(B)). The BNC reduces molecular oxygen to 2 water molecules using 4 electrons from cytochrome c in the IMS and 4 protons from the mitochondrial matrix. This Chlorocebus aethiops (Green monkey) protein is Cytochrome c oxidase subunit 2 (MT-CO2).